Consider the following 488-residue polypeptide: IQ domain-containing protein IQM1 (488 aa).

The segment at 20-46 (RTNSFKRDDTNRHQNSPKSTMERSLSF) is disordered. Positions 32–46 (HQNSPKSTMERSLSF) are enriched in polar residues. The IQ domain maps to 106 to 135 (LDAAATTLQKVYKSYRTRRNLADCAVVVEE). Disordered regions lie at residues 377 to 403 (SFKSTADEEEERKEVSEEVEIPSEKEE) and 448 to 472 (SPRVSPANSYGPIPSPRPSPKVRVS). Residues 388–403 (RKEVSEEVEIPSEKEE) are compositionally biased toward basic and acidic residues.

In terms of assembly, interacts (via IQ domain) with CAM5. In terms of tissue distribution, highly expressed in leaf mesophyll cells. Expressed in roots, rosette and cauline leaves, stems, flowers and siliques.

It localises to the cytoplasm. The protein localises to the nucleus. Involved in the modulation of stomatal movement. Promotes stomatal opening. May play a role in the regulation of chitin signaling. May be involved in biotic and abiotic stress responses. This Arabidopsis thaliana (Mouse-ear cress) protein is IQ domain-containing protein IQM1.